A 254-amino-acid polypeptide reads, in one-letter code: RxLR effector protein CRE5 (254 aa).

The N-terminal stretch at 1–19 (MQTIQLIIFVAFVLSRAAA) is a signal peptide. N49 is a glycosylation site (N-linked (GlcNAc...) asparagine). The short motif at 53–63 (RSLRQHEGEDR) is the RxLR-dEER element. The 64-residue stretch at 191 to 254 (SRWLSAGVVT…MEEGGVCRAL (64 aa)) folds into the Nudix hydrolase domain. A Nudix box motif is present at residues 228 to 249 (GGWDRGEKIKKAALREVMEEGG).

In the N-terminal section; belongs to the RxLR effector family. The protein in the C-terminal section; belongs to the Nudix hydrolase family.

The protein resides in the secreted. Its subcellular location is the host cytoplasm. It is found in the host nucleus. The protein localises to the host nucleolus. Effector that is involved in host plant infection. Contributes to virulence during the early infection stage, by inhibiting plant defense responses induced by both PAMP-triggered immunity (PTI) and effector-triggered immunity (ETI). The polypeptide is RxLR effector protein CRE5 (Phytophthora infestans (strain T30-4) (Potato late blight agent)).